A 78-amino-acid chain; its full sequence is Large ribosomal subunit protein bL28 (78 aa).

A disordered region spans residues 1-21; that stretch reads MSRVCQVTGKKPMVGNNRSHA.

The protein belongs to the bacterial ribosomal protein bL28 family.

The polypeptide is Large ribosomal subunit protein bL28 (Shewanella piezotolerans (strain WP3 / JCM 13877)).